The chain runs to 129 residues: Small ribosomal subunit protein uS11 (129 aa).

It belongs to the universal ribosomal protein uS11 family. Part of the 30S ribosomal subunit. Interacts with proteins S7 and S18. Binds to IF-3.

In terms of biological role, located on the platform of the 30S subunit, it bridges several disparate RNA helices of the 16S rRNA. Forms part of the Shine-Dalgarno cleft in the 70S ribosome. The polypeptide is Small ribosomal subunit protein uS11 (Haemophilus influenzae (strain ATCC 51907 / DSM 11121 / KW20 / Rd)).